Reading from the N-terminus, the 529-residue chain is MRGLSYFVLALSAIDAAAAASLPFLRSLQHVGRRDPAARNLPNYDFSAIPPVEKRQTASRLNGKTKKYAVDGTKIPEVQFDIGESYAGLMPISTRKDESRELYFWYFPSENPAAKDEITIWLNGGPGCSSLEGLLQENGPFLWQYGTLYPVPNPWSWTKLTNMVWVEQYNPTDDNPSRPVGTGFSQGKPSVRSQEDVATQFLGFFRNFVDTFDLHGKKIYIVGESYAGLYVPYIAHAMFEKKNKRYFNVESTMIFDPSINKDEILTQVPAVPFVEHWKGLFPFNETFTKQIHDMADKCGYSSYMKEHLVYPPKGKLPALPKATPECDVWTAIFDAVSLVNPCFDVYQVATTCPLLYDVLGYPGSFEYLPAGANVYFNRTDVQKAINAPLQKWTECSERPVFVDGKDNSEPSSFTIIPDVIEKSPRTIIAHGDLDYVLISNGTLLSIQNMTWGGAQGFSQEPSKPLFVPYHDRGSLSTLSGAGVLGRHHTERKLTYVELYLTGHMGPQYNPSASYRILEYLLGRIDDLSK.

The signal sequence occupies residues 1 to 19 (MRGLSYFVLALSAIDAAAA). The tract at residues 171–191 (PTDDNPSRPVGTGFSQGKPSV) is disordered. S225 is an active-site residue. N-linked (GlcNAc...) asparagine glycans are attached at residues N284 and N377. Residue D434 is part of the active site. 2 N-linked (GlcNAc...) asparagine glycosylation sites follow: N440 and N448. H503 is a catalytic residue.

This sequence belongs to the peptidase S10 family.

It localises to the secreted. In terms of biological role, removes acidic, neutral and basic amino acids as well as proline from the C-terminal position. This chain is Probable serine carboxypeptidase ARB_06414, found in Arthroderma benhamiae (strain ATCC MYA-4681 / CBS 112371) (Trichophyton mentagrophytes).